Here is a 127-residue protein sequence, read N- to C-terminus: Small ribosomal subunit protein uS13 (127 aa).

The interval 100–127 is disordered; that stretch reads GQRTRTNARTRKGVRKTVAGKKKAPAKK. Over residues 101 to 127 the composition is skewed to basic residues; that stretch reads QRTRTNARTRKGVRKTVAGKKKAPAKK.

Belongs to the universal ribosomal protein uS13 family. In terms of assembly, part of the 30S ribosomal subunit. Forms a loose heterodimer with protein S19. Forms two bridges to the 50S subunit in the 70S ribosome.

Located at the top of the head of the 30S subunit, it contacts several helices of the 16S rRNA. In the 70S ribosome it contacts the 23S rRNA (bridge B1a) and protein L5 of the 50S subunit (bridge B1b), connecting the 2 subunits; these bridges are implicated in subunit movement. Contacts the tRNAs in the A and P-sites. In Synechococcus sp. (strain JA-3-3Ab) (Cyanobacteria bacterium Yellowstone A-Prime), this protein is Small ribosomal subunit protein uS13.